The primary structure comprises 2271 residues: Protein Ycf2 (2271 aa).

1628 to 1635 (GSIGTGRS) is a binding site for ATP.

The protein belongs to the Ycf2 family.

The protein localises to the plastid. Its subcellular location is the chloroplast stroma. In terms of biological role, probable ATPase of unknown function. Its presence in a non-photosynthetic plant (Epifagus virginiana) and experiments in tobacco indicate that it has an essential function which is probably not related to photosynthesis. The polypeptide is Protein Ycf2 (Illicium oligandrum (Star anise)).